A 710-amino-acid chain; its full sequence is Probable threonine--tRNA ligase 1, cytoplasmic (710 aa).

The segment at 1–35 is disordered; that stretch reads MSDSQENKPVETPTEVKPVAEKKPAAEKKEKKPAV. The span at 18–33 shows a compositional bias: basic and acidic residues; sequence PVAEKKPAAEKKEKKP. In terms of domain architecture, TGS spans 72–137; the sequence is KEEPINVTLP…EADCNLQLCK (66 aa).

Belongs to the class-II aminoacyl-tRNA synthetase family.

It is found in the cytoplasm. The catalysed reaction is tRNA(Thr) + L-threonine + ATP = L-threonyl-tRNA(Thr) + AMP + diphosphate + H(+). The polypeptide is Probable threonine--tRNA ligase 1, cytoplasmic (thrS1) (Dictyostelium discoideum (Social amoeba)).